Consider the following 229-residue polypeptide: Germin-like protein subfamily 1 member 7 (229 aa).

The signal sequence occupies residues 1–24; sequence MEGFLRFLVAKAILLALASSFVSC. Residues Cys34 and Cys50 are joined by a disulfide bond. The region spanning 64-215 is the Cupin type-1 domain; it reads SGLNIAGNTI…AFQLDVNVVK (152 aa). N-linked (GlcNAc...) asparagine glycosylation is present at Asn79. Mn(2+)-binding residues include His112, His114, Glu119, and His161.

This sequence belongs to the germin family. In terms of assembly, oligomer (believed to be a pentamer but probably hexamer).

It localises to the secreted. Its subcellular location is the extracellular space. The protein localises to the apoplast. In terms of biological role, may play a role in plant defense. Probably has no oxalate oxidase activity even if the active site is conserved. This is Germin-like protein subfamily 1 member 7 from Arabidopsis thaliana (Mouse-ear cress).